Consider the following 35-residue polypeptide: MSDIN-like toxin proprotein 6 (35 aa).

The propeptide occupies 1–10 (MSDINGTRLP). A cross-link (cyclopeptide (Ile-Pro)) is located at residues 11 to 20 (IPGLIPLGIP). Positions 21 to 35 (CVSDDVNPTLTRGER) are excised as a propeptide.

Belongs to the MSDIN fungal toxin family. Post-translationally, processed by the macrocyclase-peptidase enzyme POPB to yield a toxic cyclic decapeptide. POPB first removes 10 residues from the N-terminus. Conformational trapping of the remaining peptide forces the enzyme to release this intermediate rather than proceed to macrocyclization. The enzyme rebinds the remaining peptide in a different conformation and catalyzes macrocyclization of the N-terminal 10 residues.

Functionally, probable toxin that belongs to the MSDIN-like toxin family responsible for a large number of food poisoning cases and deaths. This Amanita bisporigera (Destroying angel) protein is MSDIN-like toxin proprotein 6.